We begin with the raw amino-acid sequence, 157 residues long: SsrA-binding protein (157 aa).

Residues 138-151 are compositionally biased toward basic and acidic residues; sequence ATEAKRDWGREKQR. Positions 138–157 are disordered; it reads ATEAKRDWGREKQRLLKQHS.

This sequence belongs to the SmpB family.

Its subcellular location is the cytoplasm. Its function is as follows. Required for rescue of stalled ribosomes mediated by trans-translation. Binds to transfer-messenger RNA (tmRNA), required for stable association of tmRNA with ribosomes. tmRNA and SmpB together mimic tRNA shape, replacing the anticodon stem-loop with SmpB. tmRNA is encoded by the ssrA gene; the 2 termini fold to resemble tRNA(Ala) and it encodes a 'tag peptide', a short internal open reading frame. During trans-translation Ala-aminoacylated tmRNA acts like a tRNA, entering the A-site of stalled ribosomes, displacing the stalled mRNA. The ribosome then switches to translate the ORF on the tmRNA; the nascent peptide is terminated with the 'tag peptide' encoded by the tmRNA and targeted for degradation. The ribosome is freed to recommence translation, which seems to be the essential function of trans-translation. In Cereibacter sphaeroides (strain ATCC 17025 / ATH 2.4.3) (Rhodobacter sphaeroides), this protein is SsrA-binding protein.